The following is a 72-amino-acid chain: uncharacterized protein (72 aa).

This sequence belongs to the asfivirus I73R family.

The protein resides in the virion. This is an uncharacterized protein from Ornithodoros (relapsing fever ticks).